Here is a 115-residue protein sequence, read N- to C-terminus: Succinate dehydrogenase assembly factor 3, mitochondrial (115 aa).

The protein belongs to the complex I LYR family. SDHAF3 subfamily. In terms of assembly, interacts with the iron-sulfur protein subunit within the SDH catalytic dimer.

The protein resides in the mitochondrion matrix. Plays an essential role in the assembly of succinate dehydrogenase (SDH), an enzyme complex (also referred to as respiratory complex II) that is a component of both the tricarboxylic acid (TCA) cycle and the mitochondrial electron transport chain, and which couples the oxidation of succinate to fumarate with the reduction of ubiquinone (coenzyme Q) to ubiquinol. Promotes maturation of the iron-sulfur protein subunit of the SDH catalytic dimer, protecting it from the deleterious effects of oxidants. May act together with SDHAF1. The chain is Succinate dehydrogenase assembly factor 3, mitochondrial (acn9) from Nematostella vectensis (Starlet sea anemone).